The chain runs to 149 residues: Transcriptional repressor NrdR (149 aa).

The segment at 3 to 34 (CPFCSIQETKVIDSRLVADGHQVRRRRECTMC) is a zinc-finger region. The 91-residue stretch at 49-139 (PRVVKRDGSR…VYRSFEDIRE (91 aa)) folds into the ATP-cone domain.

This sequence belongs to the NrdR family. Requires Zn(2+) as cofactor.

In terms of biological role, negatively regulates transcription of bacterial ribonucleotide reductase nrd genes and operons by binding to NrdR-boxes. The protein is Transcriptional repressor NrdR of Pseudoalteromonas atlantica (strain T6c / ATCC BAA-1087).